Reading from the N-terminus, the 350-residue chain is MERSLDSLAGMAKSAFGAGTSAAMRQATSPKTILEYIINFFTCGGIRRRNETQYQELIETMAETLKSTMPDRGAPLPENIILDDMDGCRVEFNLPGENNEAGQVIVRVSKGDHSETREIPLASFEKICRALLFRCEFSLPQDSVILTAQGGMNLKGAVLTGANLTSENLCDADLSGANLEGAVLFMADCEGANFKGANLSGTSLGDSNFKNACLEDSIMCGATLDHANLTGANLQHASLLGCSMIECNCSGANMDHTNLSGATLIRADMSGATLQGATIMAAIMEGAVLTRANLRKASFISTNLDGADLAEANLNNTCFKDCTLTDLRTEDATMSTSTQTLFNEFYSENI.

4 Pentapeptide repeat domains span residues 162–201, 202–241, 247–286, and 287–326; these read ANLTSENLCDADLSGANLEGAVLFMADCEGANFKGANLSG, TSLGDSNFKNACLEDSIMCGATLDHANLTGANLQHASLLG, CNCSGANMDHTNLSGATLIRADMSGATLQGATIMAAIMEG, and AVLTRANLRKASFISTNLDGADLAEANLNNTCFKDCTLTD.

In terms of assembly, interacts with the host kinesin light chain (KLC), a subunit of the kinesin-1 motor complex.

The protein localises to the secreted. Its subcellular location is the host membrane. Effector proteins function to alter host cell physiology and promote bacterial survival in host tissues. Involved in the reorganization of late endosome/lysosome (LE/Lys) compartments in mammalian cells. Necessary and sufficient to link kinesin-1 onto the Salmonella-containing vacuole (SCV) membrane. Required for centrifugal extension of lysosomal glycoprotein-rich membrane tubules, known as Salmonella-induced filaments (Sifs), away from the SCV and toward the cell periphery. Required for virulence, but not for intracellular survival and replication in phagocytic cells. This chain is Secreted effector protein PipB2 (pipB2), found in Salmonella typhimurium (strain LT2 / SGSC1412 / ATCC 700720).